The sequence spans 93 residues: Sec-independent protein translocase protein TatA (93 aa).

Residues 1-21 traverse the membrane as a helical segment; that stretch reads MGIFDWKHWIVILVVVVLVFG. The disordered stretch occupies residues 43-93; that stretch reads MNDDEKPAEPVVPPAAQPVPPVQPQQSAPLNQPHTIDVQAQKVEEPTRKDS. Pro residues predominate over residues 52–65; it reads PVVPPAAQPVPPVQ. A compositionally biased stretch (basic and acidic residues) spans 84-93; sequence KVEEPTRKDS.

It belongs to the TatA/E family. The Tat system comprises two distinct complexes: a TatABC complex, containing multiple copies of TatA, TatB and TatC subunits, and a separate TatA complex, containing only TatA subunits. Substrates initially bind to the TatABC complex, which probably triggers association of the separate TatA complex to form the active translocon.

It is found in the cell inner membrane. Its function is as follows. Part of the twin-arginine translocation (Tat) system that transports large folded proteins containing a characteristic twin-arginine motif in their signal peptide across membranes. TatA could form the protein-conducting channel of the Tat system. This Pseudomonas fluorescens (strain ATCC BAA-477 / NRRL B-23932 / Pf-5) protein is Sec-independent protein translocase protein TatA.